A 260-amino-acid chain; its full sequence is Granzyme A (260 aa).

A signal peptide spans 1–26 (MRNASGPRGPSLATLLFLLLIPEGGC). A propeptide spans 27 to 28 (ER) (activation peptide). The region spanning 29–257 (IIGGDTVVPH…HLNWIKKIMK (229 aa)) is the Peptidase S1 domain. Cys54 and Cys70 are disulfide-bonded. Catalysis depends on charge relay system residues His69 and Asp113. 3 disulfides stabilise this stretch: Cys147/Cys217, Cys178/Cys196, and Cys207/Cys232. 2 N-linked (GlcNAc...) asparagine glycosylation sites follow: Asn157 and Asn169. Ser211 (charge relay system) is an active-site residue.

The protein belongs to the peptidase S1 family. Granzyme subfamily. In terms of assembly, homodimer; disulfide-linked. Interacts with APEX1. As to expression, found in cytotoxic lymphocytes and in normal lymphoid tissues such as thymus and spleen. In terms of tissue distribution, more abundant in lymphoid tissues than isoform HF2.

It is found in the secreted. Its subcellular location is the cytoplasmic granule. The enzyme catalyses Hydrolysis of proteins, including fibronectin, type IV collagen and nucleolin. Preferential cleavage: -Arg-|-Xaa-, -Lys-|-Xaa- &gt;&gt; -Phe-|-Xaa- in small molecule substrates.. Abundant protease in the cytosolic granules of cytotoxic T-cells and NK-cells which activates caspase-independent pyroptosis when delivered into the target cell through the immunological synapse. It cleaves after Lys or Arg. Cleaves APEX1 after 'Lys-31' and destroys its oxidative repair activity. Cleaves the nucleosome assembly protein SET after 'Lys-189', which disrupts its nucleosome assembly activity and allows the SET complex to translocate into the nucleus to nick and degrade the DNA. This is Granzyme A (Gzma) from Mus musculus (Mouse).